The primary structure comprises 451 residues: MTLRMLFAFALLAAAPAQAQQTEPQPAEEGGLSGTVSDDSEWQDLGIAIPAFATNADVPTPTSAGSTSALGQALAQVISANLRNNGLFKPVGPESLPRPGFEQVQAPDFAVWSARSAEMLVQGYVRANGDGQLTVGCYLYDVALKQQLEKAGWTVAPADWRRAAHKCADMIYARLSGESPFFDSRVAYIAESGPKDRRMKRLAIMDSDGANHRYLTSGQATALTPRFSPDYKSILYLSYLNGRPRIYVYDLAANTQRLVTETPGPTFAPRWSPDGKWILYSMATAGNTDIYKVPASGGASQRLTDTPGIDVGGSFSPDGSRIVFESDRSGSQQIYVMNADGSDHRRISFFGGRAATPEWSPRGDQIAFTHIVGNLRIAVVSPGGGDLRYLTDSWQDEAPTWSPNGRIIQFFRTEKGSGKASVWQVDLTGRNERRLSTPGDASDPAWGPLLP.

The signal sequence occupies residues 1–19 (MTLRMLFAFALLAAAPAQA). A compositionally biased stretch (low complexity) spans 18 to 29 (QAQQTEPQPAEE). 2 disordered regions span residues 18-37 (QAQQ…GTVS) and 431-451 (NERR…PLLP).

This sequence belongs to the TolB family. As to quaternary structure, the Tol-Pal system is composed of five core proteins: the inner membrane proteins TolA, TolQ and TolR, the periplasmic protein TolB and the outer membrane protein Pal. They form a network linking the inner and outer membranes and the peptidoglycan layer.

It localises to the periplasm. Functionally, part of the Tol-Pal system, which plays a role in outer membrane invagination during cell division and is important for maintaining outer membrane integrity. This Novosphingobium aromaticivorans (strain ATCC 700278 / DSM 12444 / CCUG 56034 / CIP 105152 / NBRC 16084 / F199) protein is Tol-Pal system protein TolB 1.